We begin with the raw amino-acid sequence, 142 residues long: Putative pre-16S rRNA nuclease (142 aa).

Belongs to the YqgF nuclease family.

Its subcellular location is the cytoplasm. Could be a nuclease involved in processing of the 5'-end of pre-16S rRNA. The protein is Putative pre-16S rRNA nuclease of Malacoplasma penetrans (strain HF-2) (Mycoplasma penetrans).